The chain runs to 301 residues: MKNDKKIYGCIEGGGTKFMLALIDSDRKMLAVERVPTTTPEETLGKSVEFFKKALPQYADSFASFGIASFGPLCLDRKSPKWGYITNTPKPFWPNTDVVTPFKEAFGCPVEIDTDVNGAALAENFWGASKGTHTSVYVTVGTGFGGGVLIDGKPIHGLAHPEMGHGIPIRHPDDRDFEGCCPYHGGCYEGLASGTAIRKRWGKALNEMEPAEFEKAREIIAFYLAHFNVTLQAFISPERIVFGGGVMHVDGMLASVRRQTAEIANSYFEGADFEKIIVLPGLGDQAGMMGAFALALAAENK.

The Zn(2+) site is built by histidine 165, cysteine 181, histidine 184, and cysteine 187.

Belongs to the ROK (NagC/XylR) family. The cofactor is Mg(2+).

It carries out the reaction D-fructose + ATP = D-fructose 6-phosphate + ADP + H(+). Its activity is regulated as follows. Inhibition by zinc ions. In Zymomonas mobilis subsp. mobilis (strain ATCC 31821 / ZM4 / CP4), this protein is Fructokinase (frk).